The chain runs to 643 residues: MNIRSNPDTTRPAVTTGALPSSRKIFSVPEAAPDLLVPLREIVLSEGAGEPNLPVYDTSGPYTDPDVTIDVNAGLPRTRLAWVKERGGVEEYDGRVIKPEDNGNVGASHAATAFKAHHKPLRGVGDAPITQLEFARAGIITKEMIYVAERENIGRKQQLERAEAALADGESFGAAVPTFITPEFVREEIARGRAIIPANINHAELEPMIIGRNFLVKINANIGNSAVTSSVEEEVDKMVWAIRWGADTVMDLSTGRNIHTTREWILRNSPVPIGTVPIYQALEKCDGDPVKLTWELYRDTLVEQCEQGVDYFTIHAGVRLPYIHLTADRVTGIVSRGGSIMAKWCLAHHKESFLYTHFEEICDLMRKYDVSFSLGDGLRPGSIADANDRAQFAELETLGELTQIAWNKGCQVMIEGPGHVPMHKIKINMDKQLKECGEAPFYTLGPLTTDIAPGYDHITSGIGAAMIGWFGCAMLCYVTPKEHLGLPNRDDVKTGVITYRVAAHAADLAKGHPAAQLRDDALSRARFDFRWQDQFNLGLDPETAVAFHDETLPKEAHKVAHFCSMCGPKFCSMKITQDVRDYAATLGDNEKAALYPEGSKLASGMTMKGVIEDGMTQMSEKFKEMGGQVYVEAEAVKESNKVL.

Substrate is bound by residues Asn-221, Met-250, Tyr-279, His-315, 335 to 337, 376 to 379, and Glu-415; these read SRG and DGLR. A Zn(2+)-binding site is contributed by His-419. Tyr-442 lines the substrate pocket. His-483 is a Zn(2+) binding site. The [4Fe-4S] cluster site is built by Cys-563, Cys-566, and Cys-571.

The protein belongs to the ThiC family. Homodimer. Requires [4Fe-4S] cluster as cofactor.

It catalyses the reaction 5-amino-1-(5-phospho-beta-D-ribosyl)imidazole + S-adenosyl-L-methionine = 4-amino-2-methyl-5-(phosphooxymethyl)pyrimidine + CO + 5'-deoxyadenosine + formate + L-methionine + 3 H(+). Its pathway is cofactor biosynthesis; thiamine diphosphate biosynthesis. Catalyzes the synthesis of the hydroxymethylpyrimidine phosphate (HMP-P) moiety of thiamine from aminoimidazole ribotide (AIR) in a radical S-adenosyl-L-methionine (SAM)-dependent reaction. This Nitrobacter hamburgensis (strain DSM 10229 / NCIMB 13809 / X14) protein is Phosphomethylpyrimidine synthase.